A 233-amino-acid chain; its full sequence is ATP-dependent Clp protease proteolytic subunit 1 (233 aa).

Serine 116 serves as the catalytic Nucleophile. Histidine 141 is a catalytic residue.

The protein belongs to the peptidase S14 family. As to quaternary structure, fourteen ClpP subunits assemble into 2 heptameric rings which stack back to back to give a disk-like structure with a central cavity, resembling the structure of eukaryotic proteasomes.

It is found in the cytoplasm. It carries out the reaction Hydrolysis of proteins to small peptides in the presence of ATP and magnesium. alpha-casein is the usual test substrate. In the absence of ATP, only oligopeptides shorter than five residues are hydrolyzed (such as succinyl-Leu-Tyr-|-NHMec, and Leu-Tyr-Leu-|-Tyr-Trp, in which cleavage of the -Tyr-|-Leu- and -Tyr-|-Trp bonds also occurs).. Its function is as follows. Cleaves peptides in various proteins in a process that requires ATP hydrolysis. Has a chymotrypsin-like activity. Plays a major role in the degradation of misfolded proteins. The chain is ATP-dependent Clp protease proteolytic subunit 1 from Salinibacter ruber (strain DSM 13855 / M31).